The sequence spans 150 residues: MANVESMIVEEKTQVKQIDREKTCPMLLRVFCSTGRHHSVSEYMFGNVPTNELQIYTWQDATLHELTSLVRDVNPDTRKKGTYFDFAVVYPNFRSNHFQMREIGVTCTGQKGIDDNKTLAQAKFSIGDFLDISITPPNRLPPTARRQRPY.

Belongs to the SAP18 family. In terms of assembly, forms a complex with SIN3 and histone deacetylase. Interacts with the N-terminal residues of TRL. Interacts with BCD; in vitro and yeast cells.

The protein resides in the nucleus. Its subcellular location is the cytoplasm. In terms of biological role, involved in the tethering of the SIN3 complex to core histone proteins. Interacts with bicoid (bcd) to repress transcription of bicoid target genes in the anterior tip of the embryo; a process known as retraction. Interacts with Trl and binds to Polycomb response elements at the bithorax complex. May contribute to the regulation of other homeotic gene expressions. This is Histone deacetylase complex subunit SAP18 (Bin1) from Drosophila melanogaster (Fruit fly).